The sequence spans 202 residues: Thymidylate kinase (202 aa).

7 to 14 is an ATP binding site; the sequence is GIDGSGKT.

It belongs to the thymidylate kinase family.

The enzyme catalyses dTMP + ATP = dTDP + ADP. Its function is as follows. Phosphorylation of dTMP to form dTDP in both de novo and salvage pathways of dTTP synthesis. The sequence is that of Thymidylate kinase from Ehrlichia chaffeensis (strain ATCC CRL-10679 / Arkansas).